The chain runs to 91 residues: Small ribosomal subunit protein uS19 (91 aa).

It belongs to the universal ribosomal protein uS19 family.

In terms of biological role, protein S19 forms a complex with S13 that binds strongly to the 16S ribosomal RNA. The protein is Small ribosomal subunit protein uS19 of Pseudomonas syringae pv. tomato (strain ATCC BAA-871 / DC3000).